The primary structure comprises 288 residues: MALFRKKDKYIRITPNNSLKGSVSHNVPEVPDELFAKCPACKHMIYKKDLGLAKICPTCSYNFRISAQERLTLTVDEGSFQELFTSIETKDPLRFPGYQEKLQKAKETTGLHEAVLTGKAMVKEQKIALAIMDSHFIMASMGTVVGEKITRLFELAIEENLPVVIFTASGGARMQEGIMSLMQMAKVSAAVKRHSNAGLFYLTILTDPTTGGVTASFAMEGDIILAEPQSLVGFAGRRVIETTVRENLPDDFQKAEFLQDHGFVDAIVKRTELRDKIAHLVAFHGGGQ.

Residues 34 to 288 (LFAKCPACKH…HLVAFHGGGQ (255 aa)) enclose the CoA carboxyltransferase N-terminal domain. Positions 38, 41, 56, and 59 each coordinate Zn(2+). Residues 38–59 (CPACKHMIYKKDLGLAKICPTC) form a C4-type zinc finger.

It belongs to the AccD/PCCB family. In terms of assembly, acetyl-CoA carboxylase is a heterohexamer composed of biotin carboxyl carrier protein (AccB), biotin carboxylase (AccC) and two subunits each of ACCase subunit alpha (AccA) and ACCase subunit beta (AccD). Zn(2+) serves as cofactor.

It localises to the cytoplasm. The enzyme catalyses N(6)-carboxybiotinyl-L-lysyl-[protein] + acetyl-CoA = N(6)-biotinyl-L-lysyl-[protein] + malonyl-CoA. The protein operates within lipid metabolism; malonyl-CoA biosynthesis; malonyl-CoA from acetyl-CoA: step 1/1. Its function is as follows. Component of the acetyl coenzyme A carboxylase (ACC) complex. Biotin carboxylase (BC) catalyzes the carboxylation of biotin on its carrier protein (BCCP) and then the CO(2) group is transferred by the transcarboxylase to acetyl-CoA to form malonyl-CoA. The protein is Acetyl-coenzyme A carboxylase carboxyl transferase subunit beta of Streptococcus pyogenes serotype M1.